The following is a 424-amino-acid chain: Histidine--tRNA ligase (424 aa).

The protein belongs to the class-II aminoacyl-tRNA synthetase family. Homodimer.

The protein localises to the cytoplasm. It catalyses the reaction tRNA(His) + L-histidine + ATP = L-histidyl-tRNA(His) + AMP + diphosphate + H(+). The polypeptide is Histidine--tRNA ligase (Edwardsiella ictaluri (strain 93-146)).